Reading from the N-terminus, the 156-residue chain is Ribosomal RNA large subunit methyltransferase H (156 aa).

Residues L73, G104, and V123–L128 contribute to the S-adenosyl-L-methionine site.

It belongs to the RNA methyltransferase RlmH family. In terms of assembly, homodimer.

The protein resides in the cytoplasm. The catalysed reaction is pseudouridine(1915) in 23S rRNA + S-adenosyl-L-methionine = N(3)-methylpseudouridine(1915) in 23S rRNA + S-adenosyl-L-homocysteine + H(+). Functionally, specifically methylates the pseudouridine at position 1915 (m3Psi1915) in 23S rRNA. This Burkholderia thailandensis (strain ATCC 700388 / DSM 13276 / CCUG 48851 / CIP 106301 / E264) protein is Ribosomal RNA large subunit methyltransferase H.